Consider the following 54-residue polypeptide: Large ribosomal subunit protein bL32c (54 aa).

The segment covering 1–20 (MAVPKKRVSKSKRDMRKTTW) has biased composition (basic residues). The interval 1–54 (MAVPKKRVSKSKRDMRKTTWKNKASKEAKKALSLAKSVSTGKSKSKGFQIKSSN) is disordered. Positions 31 to 42 (ALSLAKSVSTGK) are enriched in low complexity.

Belongs to the bacterial ribosomal protein bL32 family.

It is found in the plastid. The protein resides in the chloroplast. This chain is Large ribosomal subunit protein bL32c, found in Chlorokybus atmophyticus (Soil alga).